Here is a 389-residue protein sequence, read N- to C-terminus: Formate-dependent phosphoribosylglycinamide formyltransferase (389 aa).

N(1)-(5-phospho-beta-D-ribosyl)glycinamide is bound by residues 21 to 22 (EL) and Glu-81. ATP is bound by residues Arg-113, Lys-154, 159–164 (SSGKGQ), 194–197 (EEFI), and Glu-202. Residues 118–307 (RLAAEKLGLK…EFEIHVRAIL (190 aa)) enclose the ATP-grasp domain. Mg(2+) contacts are provided by Glu-266 and Glu-278. N(1)-(5-phospho-beta-D-ribosyl)glycinamide is bound by residues Asp-285, Lys-353, and 360–361 (RR).

The protein belongs to the PurK/PurT family. As to quaternary structure, homodimer.

It carries out the reaction N(1)-(5-phospho-beta-D-ribosyl)glycinamide + formate + ATP = N(2)-formyl-N(1)-(5-phospho-beta-D-ribosyl)glycinamide + ADP + phosphate + H(+). Its pathway is purine metabolism; IMP biosynthesis via de novo pathway; N(2)-formyl-N(1)-(5-phospho-D-ribosyl)glycinamide from N(1)-(5-phospho-D-ribosyl)glycinamide (formate route): step 1/1. In terms of biological role, involved in the de novo purine biosynthesis. Catalyzes the transfer of formate to 5-phospho-ribosyl-glycinamide (GAR), producing 5-phospho-ribosyl-N-formylglycinamide (FGAR). Formate is provided by PurU via hydrolysis of 10-formyl-tetrahydrofolate. The protein is Formate-dependent phosphoribosylglycinamide formyltransferase of Methanocaldococcus jannaschii (strain ATCC 43067 / DSM 2661 / JAL-1 / JCM 10045 / NBRC 100440) (Methanococcus jannaschii).